The primary structure comprises 319 residues: tRNA-cytidine(32) 2-sulfurtransferase (319 aa).

The PP-loop motif motif lies at 43–48 (SGGKDS). Residues Cys-118, Cys-121, and Cys-209 each coordinate [4Fe-4S] cluster.

Belongs to the TtcA family. In terms of assembly, homodimer. Mg(2+) is required as a cofactor. [4Fe-4S] cluster serves as cofactor.

It localises to the cytoplasm. It catalyses the reaction cytidine(32) in tRNA + S-sulfanyl-L-cysteinyl-[cysteine desulfurase] + AH2 + ATP = 2-thiocytidine(32) in tRNA + L-cysteinyl-[cysteine desulfurase] + A + AMP + diphosphate + H(+). It participates in tRNA modification. Its function is as follows. Catalyzes the ATP-dependent 2-thiolation of cytidine in position 32 of tRNA, to form 2-thiocytidine (s(2)C32). The sulfur atoms are provided by the cysteine/cysteine desulfurase (IscS) system. The protein is tRNA-cytidine(32) 2-sulfurtransferase of Neisseria meningitidis serogroup A / serotype 4A (strain DSM 15465 / Z2491).